Consider the following 215-residue polypeptide: Large ribosomal subunit protein bL25 (215 aa).

Acidic residues predominate over residues 192 to 203 (EEATEEEEEAAE). The segment at 192 to 215 (EEATEEEEEAAEPEVIKRKEEEEE) is disordered. Residues 205–215 (EVIKRKEEEEE) show a composition bias toward basic and acidic residues.

Belongs to the bacterial ribosomal protein bL25 family. CTC subfamily. Part of the 50S ribosomal subunit; part of the 5S rRNA/L5/L18/L25 subcomplex. Contacts the 5S rRNA. Binds to the 5S rRNA independently of L5 and L18.

Functionally, this is one of the proteins that binds to the 5S RNA in the ribosome where it forms part of the central protuberance. This is Large ribosomal subunit protein bL25 from Thermotoga maritima (strain ATCC 43589 / DSM 3109 / JCM 10099 / NBRC 100826 / MSB8).